We begin with the raw amino-acid sequence, 208 residues long: Attacin-A (208 aa).

Positions 1–20 (MQSFKICFFISCLSVVLVKG) are cleaved as a signal peptide. Positions 21–47 (QFGGTVSSNPNGGLDVNARLSKTIGDP) are excised as a propeptide.

Hemolymph and fat body.

The protein localises to the secreted. Functionally, hemolymph antibacterial protein against Gram-negative bacteria. The sequence is that of Attacin-A from Glossina morsitans morsitans (Savannah tsetse fly).